Consider the following 310-residue polypeptide: tRNA dimethylallyltransferase (310 aa).

13-20 (GPTASGKT) contacts ATP. 15 to 20 (TASGKT) provides a ligand contact to substrate. Interaction with substrate tRNA regions lie at residues 38–41 (DSAL), 162–166 (QRLSR), 243–248 (RCVGYR), and 276–283 (KRQITWLR).

This sequence belongs to the IPP transferase family. Monomer. Requires Mg(2+) as cofactor.

It carries out the reaction adenosine(37) in tRNA + dimethylallyl diphosphate = N(6)-dimethylallyladenosine(37) in tRNA + diphosphate. Functionally, catalyzes the transfer of a dimethylallyl group onto the adenine at position 37 in tRNAs that read codons beginning with uridine, leading to the formation of N6-(dimethylallyl)adenosine (i(6)A). This is tRNA dimethylallyltransferase from Vibrio atlanticus (strain LGP32) (Vibrio splendidus (strain Mel32)).